Consider the following 219-residue polypeptide: Thiopurine S-methyltransferase (219 aa).

4 residues coordinate S-adenosyl-L-methionine: tryptophan 10, leucine 45, glutamate 66, and arginine 123.

It belongs to the class I-like SAM-binding methyltransferase superfamily. TPMT family.

The protein resides in the cytoplasm. The catalysed reaction is S-adenosyl-L-methionine + a thiopurine = S-adenosyl-L-homocysteine + a thiopurine S-methylether.. In Bordetella pertussis (strain Tohama I / ATCC BAA-589 / NCTC 13251), this protein is Thiopurine S-methyltransferase.